The sequence spans 244 residues: Ureidoacrylate amidohydrolase RutB (244 aa).

Asp38 acts as the Proton acceptor in catalysis. Lys147 is an active-site residue. Cys180 (nucleophile) is an active-site residue.

It belongs to the isochorismatase family. RutB subfamily.

The enzyme catalyses (Z)-3-ureidoacrylate + H2O + H(+) = (Z)-3-aminoacrylate + NH4(+) + CO2. It carries out the reaction (Z)-3-ureidoacrylate + H2O = (Z)-3-aminoacrylate + carbamate + H(+). The catalysed reaction is (Z)-2-methylureidoacrylate + H2O + H(+) = (Z)-2-methylaminoacrylate + NH4(+) + CO2. Hydrolyzes ureidoacrylate to form aminoacrylate and carbamate. The carbamate hydrolyzes spontaneously, thereby releasing one of the nitrogen atoms of the pyrimidine ring as ammonia and one of its carbon atoms as CO2. In Shigella sonnei (strain Ss046), this protein is Ureidoacrylate amidohydrolase RutB.